We begin with the raw amino-acid sequence, 284 residues long: Proteasome subunit beta 1 (284 aa).

The propeptide at 1 to 54 (MAQRDTGGRLGAEFFTPGDSSFTAFLAAHRPALLSTRGLLPDGVRAAPDRVPHG) is removed in mature form; by autocatalysis. The active-site Nucleophile is Thr55. Basic and acidic residues predominate over residues 256–277 (RLPESETEDLSREMVEQRHTRP). The disordered stretch occupies residues 256 to 284 (RLPESETEDLSREMVEQRHTRPDGPTAAM).

Belongs to the peptidase T1B family. The 20S proteasome core is composed of 14 alpha and 14 beta subunits that assemble into four stacked heptameric rings, resulting in a barrel-shaped structure. The two inner rings, each composed of seven catalytic beta subunits, are sandwiched by two outer rings, each composed of seven alpha subunits. The catalytic chamber with the active sites is on the inside of the barrel. Has a gated structure, the ends of the cylinder being occluded by the N-termini of the alpha-subunits. Is capped by the proteasome-associated ATPase, ARC.

The protein resides in the cytoplasm. It carries out the reaction Cleavage of peptide bonds with very broad specificity.. It functions in the pathway protein degradation; proteasomal Pup-dependent pathway. Its activity is regulated as follows. The formation of the proteasomal ATPase ARC-20S proteasome complex, likely via the docking of the C-termini of ARC into the intersubunit pockets in the alpha-rings, may trigger opening of the gate for substrate entry. Interconversion between the open-gate and close-gate conformations leads to a dynamic regulation of the 20S proteasome proteolysis activity. Functionally, component of the proteasome core, a large protease complex with broad specificity involved in protein degradation. In Streptomyces avermitilis (strain ATCC 31267 / DSM 46492 / JCM 5070 / NBRC 14893 / NCIMB 12804 / NRRL 8165 / MA-4680), this protein is Proteasome subunit beta 1.